Consider the following 186-residue polypeptide: Guanylate kinase (186 aa).

Residues 4 to 182 enclose the Guanylate kinase-like domain; sequence GKLIVLTGPS…TLQNLDKILF (179 aa). 11–18 serves as a coordination point for ATP; sequence GPSGVGKG.

The protein belongs to the guanylate kinase family.

The protein resides in the cytoplasm. The catalysed reaction is GMP + ATP = GDP + ADP. Essential for recycling GMP and indirectly, cGMP. The protein is Guanylate kinase of Trichodesmium erythraeum (strain IMS101).